Here is a 253-residue protein sequence, read N- to C-terminus: Phosphoadenosine 5'-phosphosulfate reductase (253 aa).

C239 serves as the catalytic Nucleophile; cysteine thiosulfonate intermediate.

Belongs to the PAPS reductase family. CysH subfamily.

It localises to the cytoplasm. The enzyme catalyses [thioredoxin]-disulfide + sulfite + adenosine 3',5'-bisphosphate + 2 H(+) = [thioredoxin]-dithiol + 3'-phosphoadenylyl sulfate. Its pathway is sulfur metabolism; hydrogen sulfide biosynthesis; sulfite from sulfate: step 3/3. Its function is as follows. Catalyzes the formation of sulfite from phosphoadenosine 5'-phosphosulfate (PAPS) using thioredoxin as an electron donor. In Aliivibrio fischeri (strain ATCC 700601 / ES114) (Vibrio fischeri), this protein is Phosphoadenosine 5'-phosphosulfate reductase.